A 1343-amino-acid chain; its full sequence is MSGQQKTSELVFFVNGKKVTDTNPDPECTLLTYLRDKLRLCGTKLGCAEGGCGACTVVISRMDRGQNKIRHLAVNACLTPVCAMHGCAVTTVEGIGSTRTRLHPVQERLAKAHGSQCGFCTPGIVMSMYALLRSAEQPSMRDLEVAFQGNLCRCTGYRPILEGYKTFTKEFACGMGDKCCKVNGKGCGGGDDTQSVTDDTLFERSQFQPLDPSQEPIFPPELQLTPTYDSESLIFSSERVTWYRPTTLQELLQLKSDHPSAKLVVGNTEVGVEVKFKHFLYPHLINPTQVPELLEVRESEESIYFGAAVSLMEIDALLRQRIEELPEAQTRLFQCAVDMLHYFAGKQIRNVACLGGNIMTGSPISDMNPVLTAAGARLEVASLVGGKTSHRTVHMGTGFFTGYRRNVIEPHEVLLGIHFQKTTPDQHVVAFKQARRRDDDIAIVNAAVNVRFEPRTNVVAGISMAFGGMAPTTVLAPRTSQLMVKQPLDHHLVERVAESLCGELPLAASAPGGMIAYRRALVVSLIFKAYLSISRKLSEAGIISTDAIPAEERSGAELFHTPVLRSAQLFERVCSEQPVCDPIGRPEVHAAALKQATGEAIYTDDIPRMDGELYLGLVLSTKPRAKITKLDASEALALEGVHAFFSHKDLTEHENEVGPVFHDEHVFAAAEVHCYGQIVGAVAADNKALAQRAARLVRVEYEELAPVIVTIEQAIEHGSYFPDYPRYVNKGNVEEAFAAAEHTYEGSCRMGGQEHFYLETHAAVAVPRDSDELELFCSTQHPSEVQKLVAHVTTLPAHRVVCRAKRLGGGFGGKESRGISVALPVALAAYRLRRPVRCMLDRDEDMLITGTRHPFLFKYKVAFASDGLITACDIECYNNAGWSMDLSFSVLERAMYHFENCYRIPNVRVGGWVCKTNLPSNTAFRGFGGPQGMFAGEHIIRDVARIVGRDVLDVMRLNFYKTGDITHYNQKLEHFPIERCLDDCLAQSRYHEKRTEIAKFNRENRWRKRGMAVIPTKYGIAFGVMHLNQAGALINVYGDGSVLLSHGGVEIGQGLNTKMIQCAARALGIPIELIHISETATDKVPNTSPTAASVGSDLNGMAVLDACEKLNKRLAPIKEALPQGTWQEWINKAYFDRVSLSATGFYAMPGIGYHPETNPNARTYSYYTNGVGISVVEIDCLTGDHQVLSTDIVMDIGSSINPAIDIGQIEGAFMQGYGLFTLEELMYSPQGMLYSRGPGMYKLPGFADIPGEFNVSLLTGAPNPRAVYSSKAVGEPPLFIGSSAFFAIKEAIAAARQEQGLTGDFPLEAPSTSARIRMACQDKFTNLLEIPEEGSFTPWNIVP.

In terms of domain architecture, 2Fe-2S ferredoxin-type spans 8 to 95 (SELVFFVNGK…GCAVTTVEGI (88 aa)). Residues C47, C52, C55, C77, C117, C120, C152, and C154 each contribute to the [2Fe-2S] cluster site. One can recognise an FAD-binding PCMH-type domain in the interval 235–424 (FSSERVTWYR…LGIHFQKTTP (190 aa)). FAD-binding positions include 263–270 (LVVGNTEV), F343, 353–357 (CLGGN), D366, L414, and K432. Mo-molybdopterin contacts are provided by Q780 and F811. E815 and R893 together coordinate substrate. R925 serves as a coordination point for Mo-molybdopterin. F927 is a binding site for substrate. A1092 provides a ligand contact to Mo-molybdopterin. The active-site Proton acceptor is the E1275.

Belongs to the xanthine dehydrogenase family. As to quaternary structure, homodimer. FAD serves as cofactor. The cofactor is Mo-molybdopterin. It depends on [2Fe-2S] cluster as a cofactor.

The protein localises to the peroxisome. It catalyses the reaction xanthine + NAD(+) + H2O = urate + NADH + H(+). The enzyme catalyses hypoxanthine + NAD(+) + H2O = xanthine + NADH + H(+). Key enzyme in purine degradation. Catalyzes the oxidation of hypoxanthine to xanthine. Catalyzes the oxidation of xanthine to uric acid. The protein is Xanthine dehydrogenase (ry) of Drosophila pseudoobscura pseudoobscura (Fruit fly).